We begin with the raw amino-acid sequence, 90 residues long: Succinate dehydrogenase subunit 7, mitochondrial (90 aa).

Residues 1–41 constitute a mitochondrion transit peptide; it reads MAQPAFLSALRSRLRSPQPQAPALPHLQPPRRGFHVELGAR.

In terms of assembly, component of complex II composed of eight subunits in plants: four classical SDH subunits SDH1, SDH2, SDH3 and SDH4 (a flavoprotein (FP), an iron-sulfur protein (IP), and a cytochrome b composed of a large and a small subunit.), as well as four subunits unknown in mitochondria from bacteria and heterotrophic eukaryotes.

Its subcellular location is the mitochondrion inner membrane. The protein operates within carbohydrate metabolism; tricarboxylic acid cycle. This is Succinate dehydrogenase subunit 7, mitochondrial from Oryza sativa subsp. japonica (Rice).